We begin with the raw amino-acid sequence, 436 residues long: Hydrogenobyrinate a,c-diamide synthase (436 aa).

A GATase cobBQ-type domain is found at 244–435; sequence HIAVARDDAF…MHVIDFCGEK (192 aa). Cys327 functions as the Nucleophile in the catalytic mechanism.

Belongs to the CobB/CbiA family. Mg(2+) serves as cofactor.

The catalysed reaction is hydrogenobyrinate + 2 L-glutamine + 2 ATP + 2 H2O = hydrogenobyrinate a,c-diamide + 2 L-glutamate + 2 ADP + 2 phosphate + 2 H(+). Its pathway is cofactor biosynthesis; adenosylcobalamin biosynthesis; cob(II)yrinate a,c-diamide from precorrin-2 (aerobic route): step 9/10. In terms of biological role, catalyzes the ATP-dependent amidation of the two carboxylate groups at positions a and c of hydrogenobyrinate, using either L-glutamine or ammonia as the nitrogen source. The sequence is that of Hydrogenobyrinate a,c-diamide synthase from Brucella anthropi (strain ATCC 49188 / DSM 6882 / CCUG 24695 / JCM 21032 / LMG 3331 / NBRC 15819 / NCTC 12168 / Alc 37) (Ochrobactrum anthropi).